Consider the following 149-residue polypeptide: MSQTHRILLLNGPNLNMLGAREPKHYGSISLASIEEKIQTLATQHNVKVECFQANSEEKLINKIHESFQQVDFILINPAAYTHTSVALRDALLAVSIPFVEIHLSNVHKREPFRHHSYFSDVAEGVICGLGAKGYEFAFLFAIDYLAKK.

The Proton acceptor role is filled by Y26. Residues N77, H83, and D90 each contribute to the substrate site. H103 acts as the Proton donor in catalysis. Residues 104–105 and R114 each bind substrate; that span reads LS.

The protein belongs to the type-II 3-dehydroquinase family. In terms of assembly, homododecamer.

The catalysed reaction is 3-dehydroquinate = 3-dehydroshikimate + H2O. It participates in metabolic intermediate biosynthesis; chorismate biosynthesis; chorismate from D-erythrose 4-phosphate and phosphoenolpyruvate: step 3/7. Functionally, catalyzes a trans-dehydration via an enolate intermediate. This chain is 3-dehydroquinate dehydratase, found in Haemophilus influenzae (strain 86-028NP).